Here is a 329-residue protein sequence, read N- to C-terminus: 2,3,4,5-tetrahydropyridine-2,6-dicarboxylate N-succinyltransferase (329 aa).

Mg(2+)-binding residues include Asp177 and Glu194. Residue Glu210 is the Acyl-anhydride intermediate of the active site. Residues Arg212, Gly227, Ser230, Ala253, 268-269 (EA), Gly276, Lys288, and 301-304 (RRNS) contribute to the succinyl-CoA site.

It belongs to the type 2 tetrahydrodipicolinate N-succinyltransferase family. Homotrimer.

The protein localises to the cytoplasm. It catalyses the reaction (S)-2,3,4,5-tetrahydrodipicolinate + succinyl-CoA + H2O = (S)-2-succinylamino-6-oxoheptanedioate + CoA. The protein operates within amino-acid biosynthesis; L-lysine biosynthesis via DAP pathway; LL-2,6-diaminopimelate from (S)-tetrahydrodipicolinate (succinylase route): step 1/3. In terms of biological role, catalyzes the conversion of the cyclic tetrahydrodipicolinate (THDP) into the acyclic N-succinyl-L-2-amino-6-oxopimelate using succinyl-CoA. The chain is 2,3,4,5-tetrahydropyridine-2,6-dicarboxylate N-succinyltransferase from Streptomyces coelicolor (strain ATCC BAA-471 / A3(2) / M145).